Consider the following 490-residue polypeptide: UDP-N-acetylmuramate--L-alanine ligase (490 aa).

An ATP-binding site is contributed by 126-132 (GTHGKTT).

This sequence belongs to the MurCDEF family.

Its subcellular location is the cytoplasm. It carries out the reaction UDP-N-acetyl-alpha-D-muramate + L-alanine + ATP = UDP-N-acetyl-alpha-D-muramoyl-L-alanine + ADP + phosphate + H(+). It functions in the pathway cell wall biogenesis; peptidoglycan biosynthesis. Functionally, cell wall formation. The protein is UDP-N-acetylmuramate--L-alanine ligase of Sodalis glossinidius (strain morsitans).